Consider the following 1423-residue polypeptide: Guanine nucleotide exchange factor subunit RIC1 (1423 aa).

WD repeat units lie at residues 64 to 103 (TQFG…GDKY) and 304 to 343 (NKTG…LICT). Residues 437–448 (ASQTQNPRSSST) are compositionally biased toward polar residues. Residues 437–463 (ASQTQNPRSSSTHSEHKPSREKSPFAD) are disordered. Basic and acidic residues predominate over residues 449–460 (HSEHKPSREKSP). Residues Thr992 and Thr996 each carry the phosphothreonine modification. Residues Ser1015, Ser1017, Ser1019, Ser1037, and Ser1172 each carry the phosphoserine modification. The segment at 1355–1423 (PDAFQPITMG…QDGTYDCSVS (69 aa)) is disordered. A compositionally biased stretch (polar residues) spans 1379 to 1397 (GSSSHGSIPQGEVGSSNMV). Over residues 1404–1413 (TAQAEEEEPF) the composition is skewed to acidic residues.

This sequence belongs to the RIC1 family. Forms a complex with RGP1; the interaction enhances RAB6A GTPase activity. Interacts (via central domain) with RGP1. Interacts with RAB6A; the interaction is direct with a preference for RAB6A-GDP. Interacts (via C-terminus domain) with RAB33B; the interaction is direct with a preference for RAB33B-GTP. Interacts with GJA1. In terms of tissue distribution, present in kidney and various cell lines (at protein level). Widely expressed at low level.

The protein resides in the cytoplasm. It localises to the cytosol. The protein localises to the membrane. In terms of biological role, the RIC1-RGP1 complex acts as a guanine nucleotide exchange factor (GEF), which activates RAB6A by exchanging bound GDP for free GTP, and may thereby be required for efficient fusion of endosome-derived vesicles with the Golgi compartment. The RIC1-RGP1 complex participates in the recycling of mannose-6-phosphate receptors. Required for phosphorylation and localization of GJA1. Is a regulator of procollagen transport and secretion, and is required for correct cartilage morphogenesis and development of the craniofacial skeleton. The sequence is that of Guanine nucleotide exchange factor subunit RIC1 from Homo sapiens (Human).